The chain runs to 363 residues: Dihydroorotate dehydrogenase (quinone) (363 aa).

FMN-binding positions include 67-71 (AGFDK) and threonine 91. Lysine 71 contributes to the substrate binding site. 116-120 (NRMGF) is a substrate binding site. FMN contacts are provided by asparagine 156 and asparagine 189. Residue asparagine 189 coordinates substrate. Serine 192 (nucleophile) is an active-site residue. Asparagine 194 serves as a coordination point for substrate. Lysine 231 and threonine 259 together coordinate FMN. 260–261 (NT) serves as a coordination point for substrate. FMN contacts are provided by residues glycine 287, glycine 316, and 337 to 338 (YT).

The protein belongs to the dihydroorotate dehydrogenase family. Type 2 subfamily. In terms of assembly, monomer. It depends on FMN as a cofactor.

Its subcellular location is the cell membrane. It catalyses the reaction (S)-dihydroorotate + a quinone = orotate + a quinol. It participates in pyrimidine metabolism; UMP biosynthesis via de novo pathway; orotate from (S)-dihydroorotate (quinone route): step 1/1. Functionally, catalyzes the conversion of dihydroorotate to orotate with quinone as electron acceptor. The protein is Dihydroorotate dehydrogenase (quinone) of Kocuria rhizophila (strain ATCC 9341 / DSM 348 / NBRC 103217 / DC2201).